Here is a 364-residue protein sequence, read N- to C-terminus: G-protein coupled receptor 4 (364 aa).

Residues 1–8 (MCNVSQDS) are Extracellular-facing. Asn-3 carries N-linked (GlcNAc...) asparagine glycosylation. A helical membrane pass occupies residues 9 to 45 (CNIDSRLDSLFPPTLYIFVMVIGFPTNCLSLWAAFVQ). 2 disulfide bridges follow: Cys-9–Cys-258 and Cys-90–Cys-168. The Cytoplasmic segment spans residues 46–49 (VRQK). A helical transmembrane segment spans residues 50 to 80 (NELGVYLLNLSISDLLYIATLPPWVNYFLHQ). At 81-85 (DNWIH) the chain is on the extracellular side. A helical membrane pass occupies residues 86-121 (GPESCKLFGFILYTNIYISIGFLSCISVDRYLAVAH). Residues 122-129 (PLKFAKVR) lie on the Cytoplasmic side of the membrane. Residues 130–156 (RVKTAAVVSAVVWAIEIGANSAPLFHN) traverse the membrane as a helical segment. Over 157–172 (ELFEDRFNHTFCFEKY) the chain is Extracellular. An extracellular loop 2 (ECL2) region spans residues 157–172 (ELFEDRFNHTFCFEKY). Asn-164 carries an N-linked (GlcNAc...) asparagine glycan. The helical transmembrane segment at 173–210 (PMEDWVAQMNLYRVFVGFLFPWVLMLFCYQGILRAVKT) threads the bilayer. At 211 to 214 (NVST) the chain is on the cytoplasmic side. A helical transmembrane segment spans residues 215–250 (EREEKAKIKRLALSLIAILLFCFAPYHLILLSRSVV). The Extracellular segment spans residues 251 to 260 (YLGQPCDCTF). Residues 261 to 289 (EENIFTAYHVSLALTSLNCVADPILYCLA) form a helical membrane-spanning segment. Residues 290–364 (NEGARSEVTR…RVRRRRDCKC (75 aa)) lie on the Cytoplasmic side of the membrane.

Belongs to the G-protein coupled receptor 1 family.

The protein resides in the cell membrane. Activated by a network of residues that connects an extracellular-facing cavity to Glu-145, a conserved charged residue buried in the transmembrane core of the receptor. Protonation likely drives conformational changes in extracellular loop 2 (ECL2), which stabilizes movement of transmembrane 3 (TM3) and a series of rearrangements that connect the extracellular-facing cavity to Glu-145, a residue only conserved in proton-sensing G-protein coupled receptors. Proton-sensing G-protein coupled receptor activated by extracellular pH, which is required to monitor pH changes and generate adaptive reactions. Ligand binding causes a conformation change that triggers signaling via guanine nucleotide-binding proteins (G proteins) and modulates the activity of downstream effectors, such as adenylate cyclase. The chain is G-protein coupled receptor 4 from Callorhinchus milii (Ghost shark).